The primary structure comprises 332 residues: Ketol-acid reductoisomerase (NADP(+)) (332 aa).

Positions 2-182 (AKVYYDEDAS…GCTRAGLIET (181 aa)) constitute a KARI N-terminal Rossmann domain. NADP(+)-binding positions include 25–28 (YGSQ), Ser51, Ser53, and 83–86 (DTIQ). The active site involves His108. Residue Gly134 participates in NADP(+) binding. One can recognise a KARI C-terminal knotted domain in the interval 183 to 327 (TFKEETETDL…KELRKMMPWL (145 aa)). Mg(2+) contacts are provided by Asp191, Glu195, Glu227, and Glu231. Ser252 lines the substrate pocket.

It belongs to the ketol-acid reductoisomerase family. It depends on Mg(2+) as a cofactor.

The enzyme catalyses (2R)-2,3-dihydroxy-3-methylbutanoate + NADP(+) = (2S)-2-acetolactate + NADPH + H(+). It catalyses the reaction (2R,3R)-2,3-dihydroxy-3-methylpentanoate + NADP(+) = (S)-2-ethyl-2-hydroxy-3-oxobutanoate + NADPH + H(+). It functions in the pathway amino-acid biosynthesis; L-isoleucine biosynthesis; L-isoleucine from 2-oxobutanoate: step 2/4. Its pathway is amino-acid biosynthesis; L-valine biosynthesis; L-valine from pyruvate: step 2/4. Its function is as follows. Involved in the biosynthesis of branched-chain amino acids (BCAA). Catalyzes an alkyl-migration followed by a ketol-acid reduction of (S)-2-acetolactate (S2AL) to yield (R)-2,3-dihydroxy-isovalerate. In the isomerase reaction, S2AL is rearranged via a Mg-dependent methyl migration to produce 3-hydroxy-3-methyl-2-ketobutyrate (HMKB). In the reductase reaction, this 2-ketoacid undergoes a metal-dependent reduction by NADPH to yield (R)-2,3-dihydroxy-isovalerate. The protein is Ketol-acid reductoisomerase (NADP(+)) of Persephonella marina (strain DSM 14350 / EX-H1).